Reading from the N-terminus, the 164-residue chain is Urease subunit beta (164 aa).

2 stretches are compositionally biased toward polar residues: residues 1-10 (MSTKTNSTKA) and 20-32 (TNRG…GYSE). Residues 1-32 (MSTKTNSTKATSEKTDSLKTNRGTKSSAGYSE) form a disordered region.

Belongs to the urease beta subunit family. As to quaternary structure, heterotrimer of UreA (gamma), UreB (beta) and UreC (alpha) subunits. Three heterotrimers associate to form the active enzyme.

The protein resides in the cytoplasm. It carries out the reaction urea + 2 H2O + H(+) = hydrogencarbonate + 2 NH4(+). The protein operates within nitrogen metabolism; urea degradation; CO(2) and NH(3) from urea (urease route): step 1/1. The sequence is that of Urease subunit beta from Yersinia enterocolitica serotype O:8 / biotype 1B (strain NCTC 13174 / 8081).